A 51-amino-acid polypeptide reads, in one-letter code: Cytochrome b559 subunit beta (51 aa).

A helical membrane pass occupies residues 26–42 (WLAVHALAVPTVFFIGS). Histidine 30 serves as a coordination point for heme.

Belongs to the PsbE/PsbF family. In terms of assembly, heterodimer of an alpha subunit and a beta subunit. PSII is composed of 1 copy each of membrane proteins PsbA, PsbB, PsbC, PsbD, PsbE, PsbF, PsbH, PsbI, PsbJ, PsbK, PsbL, PsbM, PsbT, PsbY, PsbZ, Psb30/Ycf12, at least 3 peripheral proteins of the oxygen-evolving complex and a large number of cofactors. It forms dimeric complexes. The cofactor is heme b.

It localises to the plastid. It is found in the chloroplast thylakoid membrane. This b-type cytochrome is tightly associated with the reaction center of photosystem II (PSII). PSII is a light-driven water:plastoquinone oxidoreductase that uses light energy to abstract electrons from H(2)O, generating O(2) and a proton gradient subsequently used for ATP formation. It consists of a core antenna complex that captures photons, and an electron transfer chain that converts photonic excitation into a charge separation. The chain is Cytochrome b559 subunit beta from Bigelowiella natans (Pedinomonas minutissima).